A 369-amino-acid chain; its full sequence is MRPMTFIVGLKTLWILAFSSLSNTLAVNNSGRWWGVVNVVTSTNLLTDTKNVQLVLDPSLQLLSRKQRKLIRQNPGILHSINSGLQSAMKECKWQFRSRRWNCPTTGGDNIFGKIVNKGCRETAFIFAITSAGVTHSVARSCSEGSIESCTCDYRRRGPGGTDWHWGGCSDNIDFGRVFGREFVDSSERGRDLRYLMNRHNNEAGRMTVFSEMKQECKCHGMSGSCAVRTCWMRLPTFRAVGDFLKDRFDGASRVIYGNKGSNRASRVQTHHLEPENPTHKPPSPQDLVYFEKSPNFCTYNGKTGTSGTSGRVCNSSSLGLDGCELLCCGRGYRTKTQRVTERCHCTFHWCCHVSCLNCTNTQVLHECL.

The signal sequence occupies residues 1-19; that stretch reads MRPMTFIVGLKTLWILAFS. Asparagine 28 carries N-linked (GlcNAc...) asparagine glycosylation. 5 disulfides stabilise this stretch: cysteine 92–cysteine 103, cysteine 142–cysteine 150, cysteine 152–cysteine 169, cysteine 217–cysteine 231, and cysteine 219–cysteine 226. Serine 223 carries O-palmitoleoyl serine; by PORCN lipidation. The interval 263 to 285 is disordered; the sequence is NRASRVQTHHLEPENPTHKPPSP. Cystine bridges form between cysteine 298-cysteine 329, cysteine 314-cysteine 324, cysteine 328-cysteine 368, cysteine 344-cysteine 359, cysteine 346-cysteine 356, and cysteine 351-cysteine 352. Asparagine 315 carries an N-linked (GlcNAc...) asparagine glycan. Asparagine 358 carries an N-linked (GlcNAc...) asparagine glycan.

The protein belongs to the Wnt family. Palmitoleoylation is required for efficient binding to frizzled receptors. Palmitoleoylation is necessary for proper trafficking to cell surface. Depalmitoleoylated by NOTUM, leading to inhibit Wnt signaling pathway.

The protein localises to the secreted. It is found in the extracellular space. Its subcellular location is the extracellular matrix. In terms of biological role, ligand for members of the frizzled family of seven transmembrane receptors. Acts in the canonical Wnt signaling pathway by promoting beta-catenin-dependent transcriptional activation. Plays an essential role in the development of the embryonic brain and central nervous system (CNS). Has a role in osteoblast function, bone development and bone homeostasis. This Ambystoma mexicanum (Axolotl) protein is Protein Wnt-1 (WNT-1).